Reading from the N-terminus, the 46-residue chain is Escargot/snail protein homolog (46 aa).

3 C2H2-type zinc fingers span residues 1 to 4 (HIAH), 9 to 30 (CKCP…IRTH), and 36 to 46 (SVCQHCNRAFA).

The protein belongs to the snail C2H2-type zinc-finger protein family.

It localises to the nucleus. This chain is Escargot/snail protein homolog, found in Lithobius forficatus (Centipede).